The chain runs to 358 residues: Protein-glutamate methylesterase/protein-glutamine glutaminase 3 (358 aa).

Residues lysine 2 to leucine 118 form the Response regulatory domain. At aspartate 52 the chain carries 4-aspartylphosphate. The CheB-type methylesterase domain maps to asparagine 155–lysine 325. Catalysis depends on residues serine 167, histidine 194, and aspartate 291.

This sequence belongs to the CheB family. Post-translationally, phosphorylated by CheA. Phosphorylation of the N-terminal regulatory domain activates the methylesterase activity.

Its subcellular location is the cytoplasm. The enzyme catalyses [protein]-L-glutamate 5-O-methyl ester + H2O = L-glutamyl-[protein] + methanol + H(+). It catalyses the reaction L-glutaminyl-[protein] + H2O = L-glutamyl-[protein] + NH4(+). Functionally, involved in chemotaxis. Part of a chemotaxis signal transduction system that modulates chemotaxis in response to various stimuli. Catalyzes the demethylation of specific methylglutamate residues introduced into the chemoreceptors (methyl-accepting chemotaxis proteins or MCP) by CheR. Also mediates the irreversible deamidation of specific glutamine residues to glutamic acid. The chain is Protein-glutamate methylesterase/protein-glutamine glutaminase 3 from Vibrio cholerae serotype O1 (strain ATCC 39315 / El Tor Inaba N16961).